The sequence spans 149 residues: Transcriptional repressor NrdR (149 aa).

A zinc finger spans residues Cys3–Cys34. Residues Pro49–Glu139 enclose the ATP-cone domain.

It belongs to the NrdR family. Zn(2+) serves as cofactor.

In terms of biological role, negatively regulates transcription of bacterial ribonucleotide reductase nrd genes and operons by binding to NrdR-boxes. The chain is Transcriptional repressor NrdR from Actinobacillus pleuropneumoniae serotype 3 (strain JL03).